Here is a 273-residue protein sequence, read N- to C-terminus: DnaJ homolog subfamily C member 27 (273 aa).

The tract at residues 1 to 18 (MEASMPKRKEPGKSLRIK) is required for interaction with MAPK1. Residues 23 to 30 (GNAEVGKS), 71 to 75 (DMAGD), and 134 to 137 (NKID) each bind GTP. The J domain occupies 217–273 (DSWDMLGVKPGASRDEVNKAYRKLAVLLHPDKCVAPGSEDAFKAVVNARTALLKNIK).

The protein belongs to the small GTPase superfamily. Rab family. In terms of assembly, interacts directly with MAPK1 (wild-type and kinase-deficient forms). Interacts directly (in GTP-bound form) with MAP2K1 (wild-type and kinase-deficient forms).

The protein localises to the nucleus. In terms of biological role, GTPase which can activate the MEK/ERK pathway and induce cell transformation when overexpressed. May act as a nuclear scaffold for MAPK1, probably by association with MAPK1 nuclear export signal leading to enhanced ERK1/ERK2 signaling. This Bos taurus (Bovine) protein is DnaJ homolog subfamily C member 27 (DNAJC27).